A 900-amino-acid chain; its full sequence is MPGNLSFKDRVVVITGAGGGLGKVYALAYASRGAKVVVNDLGGTLGGSGHNSKAADLVVDEIKKAGGIAVANYDSVNENGEKIIETAIKEFGRVDVLINNAGILRDVSFAKMTEREFASVVDVHLTGGYKLSRAAWPYMRSQKFGRIINTASPAGLFGNFGQANYSAAKMGLVGLAETLAKEGAKYNINVNSIAPLARSRMTENVLPPHILKQLGPEKIVPLVLYLTHESTKVSNSIFELAAGFFGQLRWERSSGQIFNPDPKTYTPEAILNKWKEITDYRDKPFNKTQHPYQLSDYNDLITKAKKLPPNEQGSVKIKSLCNKVVVVTGAGGGLGKSHAIWFARYGAKVVVNDIKDPFSVVEEINKLYGEGTAIPDSHDVVTEAPLIIQTAISKFQRVDILVNNAGILRDKSFLKMKDEEWFAVLKVHLFSTFSLSKAVWPIFTKQKSGFIINTTSTSGIYGNFGQANYAAAKAAILGFSKTIALEGAKRGIIVNVIAPHAETAMTKTIFSEKELSNHFDASQVSPLVVLLASEELQKYSGRRVIGQLFEVGGGWCGQTRWQRSSGYVSIKETIEPEEIKENWNHITDFSRNTINPSSTEESSMATLQAVQKAHSSKELDDGLFKYTTKDCILYNLGLGCTSKELKYTYENDPDFQVLPTFAVIPFMQATATLAMDNLVDNFNYAMLLHGEQYFKLCTPTMPSNGTLKTLAKPLQVLDKNGKAALVVGGFETYDIKTKKLIAYNEGSFFIRGAHVPPEKEVRDGKRAKFAVQNFEVPHGKVPDFEAEISTNKDQAALYRLSGDFNPLHIDPTLAKAVKFPTPILHGLCTLGISAKALFEHYGPYEELKVRFTNVVFPGDTLKVKAWKQGSVVVFQTIDTTRNVIVLDNAAVKLSQAKSKL.

2 short-chain dehydrogenase like regions span residues 6-230 and 319-535; these read SFKD…THES and SLCN…ASEE. Residues I14, K53, N100, R133, Y165, and K169 each coordinate NADP(+). Y165 (proton donor) is an active-site residue. Catalysis depends on K169, which acts as the Lowers pKa of active site Tyr. Residues H689, G690, K719, D803, N805, G826, F851, and T852 each contribute to the (3R)-3-hydroxydecanoyl-CoA site. Positions 775 to 887 constitute a MaoC-like domain; the sequence is EVPHGKVPDF…DTTRNVIVLD (113 aa). The Microbody targeting signal signature appears at 898–900; it reads SKL.

Belongs to the short-chain dehydrogenases/reductases (SDR) family. As to quaternary structure, monomer.

The protein localises to the peroxisome. The catalysed reaction is a (3R)-3-hydroxyacyl-CoA = a (2E)-enoyl-CoA + H2O. The enzyme catalyses a (3R)-3-hydroxyacyl-CoA + NAD(+) = a 3-oxoacyl-CoA + NADH + H(+). It participates in lipid metabolism; fatty acid beta-oxidation. Functionally, second trifunctional enzyme acting on the beta-oxidation pathway for fatty acids, possessing hydratase-dehydrogenase-epimerase activities. Converts trans-2-enoyl-CoA via D-3-hydroxyacyl-CoA to 3-ketoacyl-CoA. The polypeptide is Peroxisomal hydratase-dehydrogenase-epimerase (FOX2) (Saccharomyces cerevisiae (strain ATCC 204508 / S288c) (Baker's yeast)).